The following is a 415-amino-acid chain: Gamma-glutamyl phosphate reductase 1 (415 aa).

It belongs to the gamma-glutamyl phosphate reductase family.

It localises to the cytoplasm. The enzyme catalyses L-glutamate 5-semialdehyde + phosphate + NADP(+) = L-glutamyl 5-phosphate + NADPH + H(+). It participates in amino-acid biosynthesis; L-proline biosynthesis; L-glutamate 5-semialdehyde from L-glutamate: step 2/2. Its function is as follows. Catalyzes the NADPH-dependent reduction of L-glutamate 5-phosphate into L-glutamate 5-semialdehyde and phosphate. The product spontaneously undergoes cyclization to form 1-pyrroline-5-carboxylate. The protein is Gamma-glutamyl phosphate reductase 1 of Bacillus licheniformis (strain ATCC 14580 / DSM 13 / JCM 2505 / CCUG 7422 / NBRC 12200 / NCIMB 9375 / NCTC 10341 / NRRL NRS-1264 / Gibson 46).